A 193-amino-acid polypeptide reads, in one-letter code: T-cell receptor-associated transmembrane adapter 1 (193 aa).

Topologically, residues 1–10 (MSGNAECHFS) are extracellular. Residues 11–31 (IWAILAFLGLALTISLIFNIF) form a helical; Signal-anchor for type III membrane protein membrane-spanning segment. The Cytoplasmic segment spans residues 32–193 (HCVEKQRQEK…LHSLDYDLAQ (162 aa)). Ser-46 is modified (phosphoserine). At Tyr-80 the chain carries Phosphotyrosine. Residues 80-83 (YEQM) are interaction with PIK3R1. Residues 116-166 (NEGKRRKPRKQKSHLSDKDEEGQMHAKDISLSKTTLVDSYPPESEAIEENI) are disordered. Over residues 119–128 (KRRKPRKQKS) the composition is skewed to basic residues. The segment covering 129 to 145 (HLSDKDEEGQMHAKDIS) has biased composition (basic and acidic residues).

As to quaternary structure, homodimer; disulfide-linked. Interacts with CD3Z. When phosphorylated, interacts with PIK3R1. Post-translationally, phosphorylated on tyrosines upon TCR activation.

It is found in the cell membrane. In terms of biological role, stabilizes the TCR (T-cell antigen receptor)/CD3 complex at the surface of T-cells. In Bos taurus (Bovine), this protein is T-cell receptor-associated transmembrane adapter 1 (TRAT1).